The following is a 492-amino-acid chain: Solute carrier family 2, facilitated glucose transporter member 1 (492 aa).

At Met1 the chain carries N-acetylmethionine. Residues 1–11 lie on the Cytoplasmic side of the membrane; sequence MEPSSKKVTGR. A helical membrane pass occupies residues 12 to 33; sequence LMLAVGGAVLGSLQFGYNTGVI. The Extracellular portion of the chain corresponds to 34-66; the sequence is NAPQKVIEEFYNQTWNHRYGESIPSTTLTTLWS. Asn45 carries N-linked (GlcNAc...) asparagine glycosylation. The helical transmembrane segment at 67–87 threads the bilayer; sequence LSVAIFSVGGMIGSFSVGLFV. Residues 88–90 lie on the Cytoplasmic side of the membrane; sequence NRF. A helical membrane pass occupies residues 91 to 112; the sequence is GRRNSMLMMNLLAFVSAVLMGF. Residues 113-120 lie on the Extracellular side of the membrane; that stretch reads SKLGKSFE. The chain crosses the membrane as a helical span at residues 121 to 144; it reads MLILGRFIIGVYCGLTTGFVPMYV. Over 145 to 155 the chain is Cytoplasmic; it reads GEVSPTALRGA. Residues 156–176 traverse the membrane as a helical segment; the sequence is LGTLHQLGIVVGILIAQVFGL. Gln161 is a D-glucose binding site. Residues 177–185 are Extracellular-facing; it reads DSIMGNADL. The chain crosses the membrane as a helical span at residues 186 to 206; the sequence is WPLLLSVIFIPALLQCILLPF. Residues 207–271 are Cytoplasmic-facing; the sequence is CPESPRFLLI…LFRSPAYRQP (65 aa). Ser226 is subject to Phosphoserine. A helical membrane pass occupies residues 272 to 293; sequence ILIAVVLQLSQQLSGINAVFYY. D-glucose-binding positions include 282-283 and Asn288; that span reads QQ. The Extracellular segment spans residues 294-306; sequence STSIFEKAGVQQP. The helical transmembrane segment at 307–328 threads the bilayer; sequence VYATIGSGIVNTAFTVVSLFVV. Asn317 contacts D-glucose. At 329–334 the chain is on the cytoplasmic side; the sequence is ERAGRR. The chain crosses the membrane as a helical span at residues 335–355; sequence TLHLIGLAGMAGCAVLMTIAL. Residues 356 to 365 lie on the Extracellular side of the membrane; the sequence is ALLEQLPWMS. The helical transmembrane segment at 366–388 threads the bilayer; that stretch reads YLSIVAIFGFVAFFEVGPGPIPW. Residues Glu380 and Trp388 each coordinate D-glucose. The Cytoplasmic portion of the chain corresponds to 389–401; the sequence is FIVAELFSQGPRP. A helical transmembrane segment spans residues 402-422; the sequence is AAVAVAGFSNWTSNFIVGMCF. The Extracellular portion of the chain corresponds to 423–429; it reads QYVEQLC. The chain crosses the membrane as a helical span at residues 430-450; that stretch reads GPYVFIIFTVLLVLFFIFTYF. The Cytoplasmic portion of the chain corresponds to 451–492; it reads KVPETKGRTFDEIASGFRQGGASQSDKTPEELFHPLGADSQV. The residue at position 465 (Ser465) is a Phosphoserine. Residues 468-492 are disordered; that stretch reads RQGGASQSDKTPEELFHPLGADSQV. Thr478 is modified (phosphothreonine). Ser490 bears the Phosphoserine mark.

Belongs to the major facilitator superfamily. Sugar transporter (TC 2.A.1.1) family. Glucose transporter subfamily. As to quaternary structure, found in a complex with ADD2, DMTN and SLC2A1. Interacts (via C-terminus cytoplasmic region) with DMTN. Interacts with SNX27; the interaction is required when endocytosed to prevent degradation in lysosomes and promote recycling to the plasma membrane. Interacts with STOM. Interacts with GIPC (via PDZ domain). Interacts with SGTA (via Gln-rich region). Interacts with isoform 1 of BSG. Interacts with SMIM43; the interaction may promote SLC2A1-mediated glucose transport to meet the energy needs of mesendoderm differentiation. Phosphorylation at Ser-226 by PKC promotes glucose uptake by increasing cell membrane localization. As to expression, detected in osteoblastic cells (at protein level). Detected in brain, and at lower levels in kidney, heart and lung.

The protein localises to the cell membrane. Its subcellular location is the photoreceptor inner segment. The catalysed reaction is D-glucose(out) = D-glucose(in). With respect to regulation, the uptake of glucose is inhibited by cytochalasin B. Glucose uptake is increased in response to phorbol ester 12-O-tetradecanoylphorbol-13-acetate (TPA) treatment: TPA-induced glucose uptake requires phosphorylation at Ser-226. Functionally, facilitative glucose transporter, which is responsible for constitutive or basal glucose uptake. Has a very broad substrate specificity; can transport a wide range of aldoses including both pentoses and hexoses. Most important energy carrier of the brain: present at the blood-brain barrier and assures the energy-independent, facilitative transport of glucose into the brain. In association with BSG and NXNL1, promotes retinal cone survival by increasing glucose uptake into photoreceptors. Required for mesendoderm differentiation. The chain is Solute carrier family 2, facilitated glucose transporter member 1 from Rattus norvegicus (Rat).